The chain runs to 531 residues: Pancreatic secretory granule membrane major glycoprotein GP2 (531 aa).

Positions 1–21 are cleaved as a signal peptide; that stretch reads MVGCDLLWLAAASCVLTLVSP. Residue N33 is glycosylated (N-linked (GlcNAc...) asparagine). The segment at 34–53 is beta hairpin; the sequence is SSNLDLDCGSPDSPSSGICF. 11 disulfides stabilise this stretch: C41–C52, C56–C151, C79–C169, C101–C139, C107–C174, C132–C140, C184–C194, C188–C203, C205–C235, C223–C314, and C255–C278. The segment at 54–74 is D10C; it reads DPCQNHTVLNDPTRSTENNDS. N-linked (GlcNAc...) asparagine glycans are attached at residues N58 and N72. One can recognise an EGF-like domain in the interval 180–224; the sequence is APKNCEITCRPEEECVFQNNNWSCVCRQDLHVSDSQSLQPLLDCG. The N-linked (GlcNAc...) asparagine glycan is linked to N200. The tract at residues 222-315 is ZP-N; it reads DCGDNEIKVK…FRVNVNFQCA (94 aa). In terms of domain architecture, ZP spans 222–478; sequence DCGDNEIKVK…PSCSTNRLRS (257 aa). N256 and N285 each carry an N-linked (GlcNAc...) asparagine glycan. The segment at 316–339 is flexible ZP-N/ZP-C linker; it reads YPLDMSVSLETALQPIVSSLTVDV. The internal hydrophobic patch (IHP) stretch occupies residues 340–351; the sequence is DGAGEFNVKMAL. Positions 340–478 are ZP-C; that stretch reads DGAGEFNVKM…PSCSTNRLRS (139 aa). Intrachain disulfides connect C395–C455, C416–C471, and C460–C467. Positions 485–493 are external hydrophobic patch (EHP); it reads YNRVLDLGP.

Interacts with SYCN. Interacts with bacterial adhesin fimH. In terms of processing, N-glycosylated. As to expression, specifically expressed by M (microfold) cells which are atypical epithelial cells of the intestine.

Its subcellular location is the zymogen granule membrane. It is found in the secreted. The protein resides in the cell membrane. The protein localises to the apical cell membrane. It localises to the membrane raft. Its subcellular location is the endosome. In terms of biological role, functions as an intestinal M-cell transcytotic receptor specific of type-I-piliated bacteria that participates in the mucosal immune response toward these bacteria. At the apical membrane of M-cells it binds fimH, a protein of the bacteria type I pilus tip. Internalizes bound bacteria, like E.coli and S.typhimurium, from the lumen of the intestine and delivers them, through M-cells, to the underlying organized lymphoid follicles where they are captured by antigen-presenting dendritic cells to elicit a mucosal immune response. The protein is Pancreatic secretory granule membrane major glycoprotein GP2 of Mus musculus (Mouse).